A 200-amino-acid chain; its full sequence is Protein Nef (200 aa).

Gly-2 carries the N-myristoyl glycine; by host lipid modification. Ser-6 carries the post-translational modification Phosphoserine; by host. The tract at residues 58-60 (EEE) is acidic; interacts with host PACS1 and PACS2; stabilizes the interaction of NEF/MHC-I with host AP1M1; necessary for MHC-I internalization. An SH3-binding; interaction with Src family tyrosine kinases region spans residues 64–73 (PVRPQVPLRP). Positions 67–70 (PQVP) match the PxxP; stabilizes the interaction of NEF/MHC-I with host AP1M1; necessary for MHC-I internalization motif. A mediates dimerization, Nef-PTE1 interaction region spans residues 103–119 (EILDLWVYHTQGYFPDW). A binding to ATP6V1H region spans residues 143–175 (VDPEEIEKANEGENNCLLHPISLHGMEDEDREV). Residues 159–160 (LL) carry the Dileucine internalization motif; necessary for CD4 internalization motif. The Diacidic; necessary for CD4 internalization motif lies at 169-170 (ED).

It belongs to the lentivirus primate group Nef protein family. As to quaternary structure, monomer; cytosolic form. Homodimer; membrane bound form. Interacts with Nef associated p21-activated kinase (PAK2); this interaction activates PAK2. Associates with the Nef-MHC-I-AP1 complex; this complex is required for MHC-I internalization. Interacts (via C-terminus) with host PI3-kinase. Interacts with host PACS1; this interaction seems to be weak. Interacts with host PACS2. Interacts with host LCK and MAPK3; these interactions inhibit the kinase activity of the latter. Interacts with host ATP6V1H; this interaction may play a role in CD4 endocytosis. Associates with the CD4-Nef-AP2 complex; this complex is required for CD4 internalization. Interacts with host AP2 subunit alpha and AP2 subunit sigma2. Interacts with TCR-zeta chain; this interaction up-regulates the Fas ligand (FasL) surface expression. Interacts with host HCK, LYN, and SRC; these interactions activate the Src family kinases. Interacts with MAP3K5; this interaction inhibits the Fas and TNFR-mediated death signals. Interacts with beta-COP and PTE1. Interacts with human RACK1; this increases Nef phosphorylation by PKC. Interacts with TP53; this interaction decreases the half-life of TP53, protecting the infected cell against p53-mediated apoptosis. Post-translationally, the virion-associated Nef proteins are cleaved by the viral protease to release the soluble C-terminal core protein. Nef is probably cleaved concomitantly with viral structural proteins on maturation of virus particles. In terms of processing, myristoylated. Phosphorylated on serine residues, probably by host PKCdelta and theta.

It is found in the host cell membrane. The protein resides in the virion. It localises to the secreted. Its subcellular location is the host Golgi apparatus membrane. Its function is as follows. Factor of infectivity and pathogenicity, required for optimal virus replication. Alters numerous pathways of T-lymphocyte function and down-regulates immunity surface molecules in order to evade host defense and increase viral infectivity. Alters the functionality of other immunity cells, like dendritic cells, monocytes/macrophages and NK cells. In infected CD4(+) T-lymphocytes, down-regulates the surface MHC-I, mature MHC-II, CD4, CD28, CCR5 and CXCR4 molecules. Mediates internalization and degradation of host CD4 through the interaction of with the cytoplasmic tail of CD4, the recruitment of AP-2 (clathrin adapter protein complex 2), internalization through clathrin coated pits, and subsequent transport to endosomes and lysosomes for degradation. Diverts host MHC-I molecules to the trans-Golgi network-associated endosomal compartments by an endocytic pathway to finally target them for degradation. MHC-I down-regulation may involve AP-1 (clathrin adapter protein complex 1) or possibly Src family kinase-ZAP70/Syk-PI3K cascade recruited by PACS2. In consequence infected cells are masked for immune recognition by cytotoxic T-lymphocytes. Decreasing the number of immune receptors also prevents reinfection by more HIV particles (superinfection). Down-regulates host SERINC3 and SERINC5 thereby excluding these proteins from the viral particles. Virion infectivity is drastically higher when SERINC3 or SERINC5 are excluded from the viral envelope, because these host antiviral proteins impair the membrane fusion event necessary for subsequent virion penetration. Functionally, bypasses host T-cell signaling by inducing a transcriptional program nearly identical to that of anti-CD3 cell activation. Interaction with TCR-zeta chain up-regulates the Fas ligand (FasL). Increasing surface FasL molecules and decreasing surface MHC-I molecules on infected CD4(+) cells send attacking cytotoxic CD8+ T-lymphocytes into apoptosis. In terms of biological role, plays a role in optimizing the host cell environment for viral replication without causing cell death by apoptosis. Protects the infected cells from apoptosis in order to keep them alive until the next virus generation is ready to strike. Inhibits the Fas and TNFR-mediated death signals by blocking MAP3K5/ASK1. Decreases the half-life of TP53, protecting the infected cell against p53-mediated apoptosis. Inhibits the apoptotic signals regulated by the Bcl-2 family proteins through the formation of a Nef/PI3-kinase/PAK2 complex that leads to activation of PAK2 and induces phosphorylation of host BAD. Its function is as follows. Extracellular Nef protein targets CD4(+) T-lymphocytes for apoptosis by interacting with CXCR4 surface receptors. This is Protein Nef from Human immunodeficiency virus type 1 group M subtype F2 (isolate MP255) (HIV-1).